The following is a 404-amino-acid chain: Latent membrane protein 1 (404 aa).

Over 1 to 23 (MERDLESAPPSAPRPPLGPPLSS) the chain is Cytoplasmic. A helical membrane pass occupies residues 24–44 (SIGLALLLLLLALLFWLYIVM). At 45-51 (SDWTGGA) the chain is on the extracellular side. Residues 52 to 72 (LLVLYSFALMLIIIILIIFIF) form a helical membrane-spanning segment. Residues 73–75 (RRD) lie on the Cytoplasmic side of the membrane. The chain crosses the membrane as a helical span at residues 76 to 96 (LLCPLGGLGLLLLMITLLLIA). Residues 97–106 (LWNLHGQALY) are Extracellular-facing. The helical transmembrane segment at 107–127 (LGIVLFIFGCLLVFGIWIYFL) threads the bilayer. Residues 128–139 (EILWRLGATLWQ) lie on the Cytoplasmic side of the membrane. A helical membrane pass occupies residues 140-160 (LLAFILAFFLAIILLIIALYL). Residues 161–163 (QQN) are Extracellular-facing. A helical transmembrane segment spans residues 164–184 (WWTLLVDLLWLLLFMAILIWM). Residues 185 to 404 (YYHGPRHTDE…HGPVQLSYYD (220 aa)) are Cytoplasmic-facing. Residues 194-232 (EHHHDDSLPHPQQATDDSSHESDSNSNEGRHHLLVSGAG) are CTAR1. Residues 194–404 (EHHHDDSLPH…HGPVQLSYYD (211 aa)) form a disordered region. An Interaction with host TRAF proteins motif is present at residues 204–208 (PQQAT). Residues 210-224 (DSSHESDSNSNEGRH) show a composition bias toward basic and acidic residues. Low complexity-rich tracts occupy residues 251–322 (NGPQ…PQDP) and 375–384 (PHLPTLLLGT). Positions 370 to 404 (GGGGDPHLPTLLLGTSGSGGDDDDPHGPVQLSYYD) are CTAR2.

Belongs to the herpesviridae LMP-1 family. As to quaternary structure, interacts (via PXQXT motif) with host tumor necrosis factor receptor-associated factor (TRAF) proteins TRAF1, TRAF2, TRAF3 and TRAF5. Interacts with human protein ZMYND11; leading to negatively regulate NF-kappa-B activation. Interacts with host UBE2I; this interaction induces the sumoylation of various cellular proteins. Interacts with host IRF7. Interacts with host TYK2. Post-translationally, ubiquitinated on the N-terminus.

It localises to the host cell membrane. Acts as a CD40 functional homolog to prevent apoptosis of infected B-lymphocytes and drive their proliferation. Functions as a constitutively active tumor necrosis factor receptor that induces the activation of several signaling pathways, including those of the NF-kappa-B family. LMP1 signaling leads to up-regulation of antiapoptotic proteins and provide growth signals in latently infected cells. Interacts with host UBE2I and subsequently affects the sumoylation state of several cellular proteins. For example, induces the sumoylation of host IRF7 thereby limiting its transcriptional activity and modulating the activation of innate immune responses. Also inhibits host IFN-alpha-stimulated STAT2 nuclear translocation and interferon-stimulated response element transcriptional activity by interacting with and inhibiting host TYK2. Induces SUMO expression during viral latency thereby dysregulating the host sumoylation processes. This Homo sapiens (Human) protein is Latent membrane protein 1 (LMP1).